Reading from the N-terminus, the 106-residue chain is Thioredoxin-like protein YusE (106 aa).

Positions 1 to 101 (MKELQEHELD…LYELIKQKSS (101 aa)) constitute a Thioredoxin domain. A disulfide bridge links cysteine 26 with cysteine 29.

This Bacillus subtilis (strain 168) protein is Thioredoxin-like protein YusE (yusE).